The sequence spans 1095 residues: Formin-like protein 2 (1095 aa).

A GBD/FH3 domain is found at 23 to 469 (LPMPEPGELE…EAIQRQSTLE (447 aa)). Positions 381 to 478 (LLEDAETKNA…EKKIHELEKQ (98 aa)) form a coiled coil. Residues 521–602 (PSSGPLPPPP…PSAPPLPGTS (82 aa)) are disordered. Pro residues-rich tracts occupy residues 524 to 534 (GPLPPPPPPLP), 548 to 576 (ATPP…PLPG), and 583 to 599 (PAPP…PPLP). Positions 617–1008 (IKKPIKTKFR…LMEKLLEQEA (392 aa)) constitute an FH2 domain.

Belongs to the formin homology family. Interacts with TCP11L2; this interaction promotes muscle-derived satellite cell (MDSC) migration and differentiation.

The protein resides in the cytoplasm. Its function is as follows. Plays a role in the regulation of cell morphology and cytoskeletal organization. Required in the cortical actin filament dynamics. The polypeptide is Formin-like protein 2 (Bos taurus (Bovine)).